A 332-amino-acid chain; its full sequence is 2,3-diketo-L-gulonate reductase (332 aa).

The Proton donor role is filled by H44. NAD(+) is bound by residues 168-174, 224-225, and 304-306; these read ITMVDMS, WK, and GHE.

The protein belongs to the LDH2/MDH2 oxidoreductase family. DlgD subfamily. As to quaternary structure, homodimer.

The protein localises to the cytoplasm. It carries out the reaction 3-dehydro-L-gulonate + NAD(+) = 2,3-dioxo-L-gulonate + NADH + H(+). It catalyses the reaction 3-dehydro-L-gulonate + NADP(+) = 2,3-dioxo-L-gulonate + NADPH + H(+). In terms of biological role, catalyzes the reduction of 2,3-diketo-L-gulonate in the presence of NADH, to form 3-keto-L-gulonate. The protein is 2,3-diketo-L-gulonate reductase of Salmonella paratyphi B (strain ATCC BAA-1250 / SPB7).